The sequence spans 281 residues: BURP domain-containing protein BNM2C (281 aa).

Residues M1–A25 form the signal peptide. Positions F59 to K281 constitute a BURP domain.

As to expression, expressed in the radicle of germinating seeds 2 days post-imbibition (DPI) and in roots of 30-DPI young plants. Expressed in the embryo and seed coat tissues of developing seeds. The protein accumulates only in seeds and only long after transcript accumulation becomes evident.

The protein resides in the protein storage vacuole. This is BURP domain-containing protein BNM2C from Brassica napus (Rape).